The following is a 58-amino-acid chain: Small ribosomal subunit protein eS27 (58 aa).

Residues Cys10, Cys13, Cys29, and Cys32 each contribute to the Zn(2+) site. The segment at 10–32 adopts a C4-type zinc-finger fold; the sequence is CPDCEHEQVIFDHPSTIVKCIIC.

This sequence belongs to the eukaryotic ribosomal protein eS27 family. In terms of assembly, part of the 30S ribosomal subunit. It depends on Zn(2+) as a cofactor.

This chain is Small ribosomal subunit protein eS27, found in Archaeoglobus fulgidus (strain ATCC 49558 / DSM 4304 / JCM 9628 / NBRC 100126 / VC-16).